The primary structure comprises 219 residues: MNSKFIVIEGLEGAGKTTARHIVVETLRSHGVKEVVFTREPGGTPLAEKLRELIKQGMTDEKVTDKAEVLMLYAARVQLVDNVIKPALANGQWVIGDRHDLSSQAYQGGGRGIDQQLLRSLRDTVLGDFRPDLTLYLDLPPAIGLQRARARGELDRIEQESLAFFERTRSRYQELAAEDDSILTIDASQSIEAVSADIQAALQQWLQQQGLLAVVQEPR.

10-17 is an ATP binding site; it reads GLEGAGKT.

Belongs to the thymidylate kinase family.

It carries out the reaction dTMP + ATP = dTDP + ADP. Functionally, phosphorylation of dTMP to form dTDP in both de novo and salvage pathways of dTTP synthesis. This chain is Thymidylate kinase, found in Pectobacterium carotovorum subsp. carotovorum (strain PC1).